We begin with the raw amino-acid sequence, 160 residues long: Protransforming growth factor alpha (160 aa).

An N-terminal signal peptide occupies residues 1–23 (MVPSAGQFALFALGILLAVCQAL). The propeptide at 24-39 (ENSTSALSADPPIAAA) is removed in mature form. The Extracellular portion of the chain corresponds to 24–98 (ENSTSALSAD…AVVAASQKKQ (75 aa)). N-linked (GlcNAc...) asparagine glycosylation is present at asparagine 25. The EGF-like domain maps to 43–83 (HFNDCPDSHSQFCFHGTCRFLVQEDKPACVCHSGYVGARCE). Intrachain disulfides connect cysteine 47-cysteine 60, cysteine 55-cysteine 71, and cysteine 73-cysteine 82. Residues 90-160 (VVAASQKKQA…TACCHSETVV (71 aa)) constitute a propeptide, removed in mature form. Residues 99 to 124 (AITALVVVSIVALAVLIITCVLIHCC) form a helical membrane-spanning segment. Topologically, residues 125–160 (QVRKHCEWCRALICRHEKPSALLKGRTACCHSETVV) are cytoplasmic. S-palmitoyl cysteine attachment occurs at residues cysteine 153 and cysteine 154.

Interacts with the PDZ domains of MAGI3, SDCBP and SNTA1. The interaction with SDCBP, is required for the targeting to the cell surface. In the endoplasmic reticulum, in its immature form (i.e. with a prosegment and lacking full N-glycosylation), interacts with CNIH. In the Golgi apparatus, may form a complex with CNIH and GORASP2. Interacts (via cytoplasmic C-terminal domain) with NKD2.

The protein localises to the secreted. It localises to the extracellular space. The protein resides in the cell membrane. TGF alpha is a mitogenic polypeptide that is able to bind to the EGF receptor/EGFR and to act synergistically with TGF beta to promote anchorage-independent cell proliferation in soft agar. This is Protransforming growth factor alpha (TGFA) from Sus scrofa (Pig).